We begin with the raw amino-acid sequence, 243 residues long: Orotidine 5'-phosphate decarboxylase (243 aa).

Substrate contacts are provided by residues D18, K39, 66–75, T130, R192, Q201, G221, and R222; that span reads DLKFHDIPTT. K68 functions as the Proton donor in the catalytic mechanism.

Belongs to the OMP decarboxylase family. Type 1 subfamily. As to quaternary structure, homodimer.

The catalysed reaction is orotidine 5'-phosphate + H(+) = UMP + CO2. Its pathway is pyrimidine metabolism; UMP biosynthesis via de novo pathway; UMP from orotate: step 2/2. In terms of biological role, catalyzes the decarboxylation of orotidine 5'-monophosphate (OMP) to uridine 5'-monophosphate (UMP). The chain is Orotidine 5'-phosphate decarboxylase from Synechococcus sp. (strain CC9311).